A 120-amino-acid polypeptide reads, in one-letter code: NAD(P)H-quinone oxidoreductase subunit 3, chloroplastic (120 aa).

3 helical membrane passes run 7-27 (YDYFFVFLLIISFFSILIFSL), 64-84 (MFALVFVIFDVETVFLYPWAM), and 89-109 (FGISSFIEALIFILILIIGLV).

Belongs to the complex I subunit 3 family. NDH is composed of at least 16 different subunits, 5 of which are encoded in the nucleus.

Its subcellular location is the plastid. It localises to the chloroplast thylakoid membrane. It carries out the reaction a plastoquinone + NADH + (n+1) H(+)(in) = a plastoquinol + NAD(+) + n H(+)(out). It catalyses the reaction a plastoquinone + NADPH + (n+1) H(+)(in) = a plastoquinol + NADP(+) + n H(+)(out). In terms of biological role, NDH shuttles electrons from NAD(P)H:plastoquinone, via FMN and iron-sulfur (Fe-S) centers, to quinones in the photosynthetic chain and possibly in a chloroplast respiratory chain. The immediate electron acceptor for the enzyme in this species is believed to be plastoquinone. Couples the redox reaction to proton translocation, and thus conserves the redox energy in a proton gradient. The sequence is that of NAD(P)H-quinone oxidoreductase subunit 3, chloroplastic from Marchantia polymorpha (Common liverwort).